A 452-amino-acid polypeptide reads, in one-letter code: MEKRVEKRRIVLVPVAAQGHVTPMMQLGKALQSKGFLITVAQRQFNQIGSSLQHFPGFDFVTIPESLPQSESKKLGPAEYLMNLNKTSEASFKECISQLSMQQGNDIACIIYDKLMYFCEAAAKEFKIPSVIFSTSSATIQVCYCVLSELSAEKFLIDMKDPEKQDKVLEGLHPLRYKDLPTSGFGPLEPLLEMCREVVNKRTASAVIINTASCLESLSLSWLQQELGIPVYPLGPLHITASSPGPSLLQEDMSCIEWLNKQKPRSVIYISLGTKAHMETKEMLEMAWGLLNSNQPFLWVIRPGSVAGFEWIELLPEEVIKMVTERGYIAKWAPQIEVLGHPAVGGFWSHCGWNSTLESIVEGVPMICRPLQGEQKLNAMYIESVWKIGIQLEGEVEREGVERAVKRLIIDEEGAAMRERALDLKEKLNASVRSGGSSYNALDELVKFLNTE.

UDP-alpha-D-glucose-binding positions include Thr-274, 333–335 (APQ), 350–358 (HCGWNSTLE), and 372–375 (QGEQ).

Belongs to the UDP-glycosyltransferase family.

The polypeptide is UDP-glycosyltransferase 76E4 (UGT76E4) (Arabidopsis thaliana (Mouse-ear cress)).